Here is a 135-residue protein sequence, read N- to C-terminus: ATP synthase epsilon chain (135 aa).

Belongs to the ATPase epsilon chain family. F-type ATPases have 2 components, CF(1) - the catalytic core - and CF(0) - the membrane proton channel. CF(1) has five subunits: alpha(3), beta(3), gamma(1), delta(1), epsilon(1). CF(0) has three main subunits: a, b and c.

It is found in the cell inner membrane. Functionally, produces ATP from ADP in the presence of a proton gradient across the membrane. This is ATP synthase epsilon chain from Nitrobacter winogradskyi (strain ATCC 25391 / DSM 10237 / CIP 104748 / NCIMB 11846 / Nb-255).